The chain runs to 150 residues: MRTVVQQVREASVSIGGELHSSIGTGLLVLAGISRDDTADDLAWMSRKIPNLRIFEDEKGKMNRSLKDIGGALLVVSQFTLYADASRGNRPGFSESAPPELARVLFDRFVESIRHEAGCPVETGVFGADMQVSLVNDGPVTIILESPKKP.

The short motif at 138 to 139 is the Gly-cisPro motif, important for rejection of L-amino acids element; the sequence is GP.

It belongs to the DTD family. As to quaternary structure, homodimer.

The protein resides in the cytoplasm. It catalyses the reaction glycyl-tRNA(Ala) + H2O = tRNA(Ala) + glycine + H(+). The catalysed reaction is a D-aminoacyl-tRNA + H2O = a tRNA + a D-alpha-amino acid + H(+). In terms of biological role, an aminoacyl-tRNA editing enzyme that deacylates mischarged D-aminoacyl-tRNAs. Also deacylates mischarged glycyl-tRNA(Ala), protecting cells against glycine mischarging by AlaRS. Acts via tRNA-based rather than protein-based catalysis; rejects L-amino acids rather than detecting D-amino acids in the active site. By recycling D-aminoacyl-tRNA to D-amino acids and free tRNA molecules, this enzyme counteracts the toxicity associated with the formation of D-aminoacyl-tRNA entities in vivo and helps enforce protein L-homochirality. The chain is D-aminoacyl-tRNA deacylase from Chlorobaculum tepidum (strain ATCC 49652 / DSM 12025 / NBRC 103806 / TLS) (Chlorobium tepidum).